The primary structure comprises 446 residues: tRNA(Ile2) 2-agmatinylcytidine synthetase TiaS (446 aa).

Belongs to the TiaS family.

The protein localises to the cytoplasm. The catalysed reaction is cytidine(34) in tRNA(Ile2) + agmatine + ATP + H2O = 2-agmatinylcytidine(34) in tRNA(Ile2) + AMP + 2 phosphate + 2 H(+). In terms of biological role, ATP-dependent agmatine transferase that catalyzes the formation of 2-agmatinylcytidine (agm2C) at the wobble position (C34) of tRNA(Ile2), converting the codon specificity from AUG to AUA. The protein is tRNA(Ile2) 2-agmatinylcytidine synthetase TiaS of Cenarchaeum symbiosum (strain A).